The primary structure comprises 1243 residues: MMRRPPSQGRWSASHQKLLLAFAFILIPWLQLADAQQQPQQPQIRIHSQRGDAPLDKVADDANTRWYATHAAPDVHPEAKFDTVNRKQKQQSTASPQQHQKYRRAPYDYASKDKAQNRYAQHPIRESEKPNYVKVPNDASALATLAPAQPVRAPHTSRHHWPSSSAASGLASPQNARSLEDWEVEDFVLLATVDGDLYASDRKTGRHLWHLEVDQPVVETKHYRTNNSVLDDDYRPVDHYIWAVEPSRDGGLYVWIPDSGAGLVRTGFTMKHLVEELAPYAGDEPPVVYTGDKKTTMVTLDAATGRVLKWFGSSGSQVNEAESCLRPNAFDDRDTTECSSMGTITLGRTEYTVGIQRRDGRPIATLKYAEWGPNTFDSDLYQQYHASLDNHYITSQHDGRIYAFDKSQAENDLPLYTHKFSSPVARVFDVCRPWDANAGSNPELVVLPQPPIPALDESTVKMRSNSIFLNQTESGDWYALSGRAYPLILDAPVAQISRDDLWDMAHAFDSINPNKLSKALVGTHFLNPVKSTGYHQPPTLPAGALDEYYEDLENASNNAHAVTNTVPEEPTIITKVKALPQSAANSVIDFVSNPILIIFLIGSLIYNEKKLRRSYHRFRTHGTIKDVYPFFVIESEAGDESGDDKDGVFPSSPSPRSQPQDQNAEDHLSRHKVERNAGDQDKVKDNRSLHDVSDTLEPSNKTVEKTADVVKQVDVAGPDAPSTDSNGAAPEKKKKAHRGRRGGVKHRKGRPTDGSQSHENDPALTTVDEAVSNAKKLGDRPSLEPDVMTIYNDMQAVTGSVISMGNIEVDTDVELGMGSNGTVVFAGRFDGRDVAVKRMTIQFYDIATRETKLLRESDDHPNVIRYYSQVQRGDFLYIALERCAASLADVIEKPYAFGELAKAGQKDLPGVLYQITNGISHLHSLRIVHRDLKPQNILVNLDKDGRPRLLVSDFGLCKKLEDRQSSFGATTGRAAGTSGWRAPELLLDDDGQNPAAIDSSTHSGSHTILVGDPNSLSNGGRATRAIDIFSLGLVFFYVLTNGSHPFDCGDRYMREVNIRKGNYNLDPLDALGDFAYEAKDLIASMLQASPKARPDSREVMAHPFFWSPKKRLAFLCDVSDSLEKEVRDPPSPALVELERHAPEVIKGDFLKVLTRDFVESLGKQRKYTGNKLLDLLRALRNKRNHYEDMSDSLKRSVGSLPDGYLAYWTVKFPMLLLTCWNVVYNLEWEKTDRFREYYEPAGL.

A signal peptide spans 1–35 (MMRRPPSQGRWSASHQKLLLAFAFILIPWLQLADA). Residues 36–585 (QQQPQQPQIR…VKALPQSAAN (550 aa)) are Lumenal-facing. 2 disordered regions span residues 70 to 132 (HAAP…KPNY) and 149 to 172 (QPVR…GLAS). The segment covering 73–85 (PDVHPEAKFDTVN) has biased composition (basic and acidic residues). Polar residues predominate over residues 90–99 (QQSTASPQQH). Positions 163 to 172 (SSSAASGLAS) are enriched in low complexity. N-linked (GlcNAc...) asparagine glycosylation is found at Asn226, Asn470, and Asn554. The helical transmembrane segment at 586 to 606 (SVIDFVSNPILIIFLIGSLIY) threads the bilayer. Residues 607–1243 (NEKKLRRSYH…FREYYEPAGL (637 aa)) lie on the Cytoplasmic side of the membrane. The segment at 638 to 765 (GDESGDDKDG…QSHENDPALT (128 aa)) is disordered. A compositionally biased stretch (low complexity) spans 650 to 660 (PSSPSPRSQPQ). Basic and acidic residues predominate over residues 674 to 693 (ERNAGDQDKVKDNRSLHDVS). Residues 732–749 (KKKKAHRGRRGGVKHRKG) show a composition bias toward basic residues. In terms of domain architecture, Protein kinase spans 809 to 1105 (VDTDVELGMG…SREVMAHPFF (297 aa)). Residues 815 to 823 (LGMGSNGTV) and Lys837 each bind ATP. ADP-binding residues include Ser819, Lys837, Glu881, and Cys883. Asp931 functions as the Proton acceptor in the catalytic mechanism. Mg(2+) is bound by residues Asn936 and Asp953. The KEN domain occupies 1108–1240 (PKKRLAFLCD…TDRFREYYEP (133 aa)).

It belongs to the protein kinase superfamily. Ser/Thr protein kinase family. It depends on Mg(2+) as a cofactor. Autophosphorylated mainly on serine residues; phosphorylation enables nucleotide binding by the active site.

The protein localises to the endoplasmic reticulum membrane. The catalysed reaction is L-seryl-[protein] + ATP = O-phospho-L-seryl-[protein] + ADP + H(+). It carries out the reaction L-threonyl-[protein] + ATP = O-phospho-L-threonyl-[protein] + ADP + H(+). In terms of biological role, senses unfolded proteins in the lumen of the endoplasmic reticulum via its N-terminal domain which leads to enzyme auto-activation. The active endoribonuclease domain splices precursor mRNAs to produce their mature form which then induces transcription of UPR target genes. The protein is Serine/threonine-protein kinase/endoribonuclease IRE1 of Hypocrea jecorina (strain QM6a) (Trichoderma reesei).